The primary structure comprises 278 residues: MAHLGRLMVPLAALVLLLWAVPGAHGRRNNVRVLTDENWTSLLEGEWMIEFYAPWCPACQNLQPEWESFAEWGEDLEVKVAKVDVTEQTGLSGRFIITALPSIYHCKDGEFRRYVGPRTKKDFINFVSDKEWKNIEPISSWFGPSSVLMTMMSALFQLSVYIRTSHSYFVHDLGIPAWGSYLVFAFATVLSGLLLGLCMIFVADCLCPSKRRKPQQQYAKKTSPEFSQPLKKVEEEQEADEEDVSEEEAEDREGASKATSQSSIRQRCVGLPSATDTS.

Residues 1–26 (MAHLGRLMVPLAALVLLLWAVPGAHG) form the signal peptide. The Thioredoxin domain occupies 27–132 (RRNNVRVLTD…FINFVSDKEW (106 aa)). The Extracellular segment spans residues 27 to 181 (RRNNVRVLTD…DLGIPAWGSY (155 aa)). Residues Cys-56 and Cys-59 each act as nucleophile in the active site. Cysteines 56 and 59 form a disulfide. The chain crosses the membrane as a helical span at residues 182–202 (LVFAFATVLSGLLLGLCMIFV). The Cytoplasmic segment spans residues 203-278 (ADCLCPSKRR…VGLPSATDTS (76 aa)). S-palmitoyl cysteine attachment occurs at residues Cys-205 and Cys-207. Residues 217–226 (QYAKKTSPEF) are compositionally biased toward polar residues. Residues 217–278 (QYAKKTSPEF…VGLPSATDTS (62 aa)) are disordered. Residues 235–251 (EEQEADEEDVSEEEAED) are compositionally biased toward acidic residues. Phosphoserine is present on residues Ser-245 and Ser-278.

In terms of assembly, interacts with ATP2A2. Palmitoylated; palmitoylation is required for localization to mitochondria-associated endoplasmic reticulum membrane (MAM).

It is found in the endoplasmic reticulum membrane. Its subcellular location is the mitochondrion membrane. The protein localises to the secreted. It catalyses the reaction Catalyzes the rearrangement of -S-S- bonds in proteins.. Its function is as follows. Thiredoxin domain-containing protein that participates in various redox reactions through the reversible oxidation of its active center dithiol to a disulfide and catalyze dithiol-disulfide exchange reactions. Acts as a key inhibitor of the alternative triglyceride biosynthesis pathway by inhibiting the activity of TMEM68/DIESL at the endoplasmic reticulum, thereby restricting accumulation of triacylglycerol. The alternative triglyceride biosynthesis pathway mediates formation of triacylglycerol from diacylglycerol and membrane phospholipids. Acts as a protein disulfide isomerase by catalyzing formation or reduction of disulfide bonds. Specifically mediates formation of disulfide bonds of transmembrane proteins at the endoplasmic reticulum membrane. Involved in ER-associated degradation (ERAD) via its protein disulfide isomerase activity by acting on folding-defective polypeptides at the endoplasmic reticulum membrane. Acts as a negative regulator of platelet aggregation following secretion in the extracellular space. Acts as a regulator of endoplasmic reticulum-mitochondria contact sites via its ability to regulate redox signals. Regulates endoplasmic reticulum-mitochondria Ca(2+) flux. This Mus musculus (Mouse) protein is Thioredoxin-related transmembrane protein 1.